Here is a 154-residue protein sequence, read N- to C-terminus: Myoglobin (154 aa).

Residues Gly-2–Lys-148 enclose the Globin domain. Ser-4 carries the phosphoserine modification. His-65 is a binding site for nitrite. His-65 lines the O2 pocket. Thr-68 is modified (phosphothreonine). His-94 is a binding site for heme b.

The protein belongs to the globin family. Monomeric.

It localises to the cytoplasm. Its subcellular location is the sarcoplasm. It carries out the reaction Fe(III)-heme b-[protein] + nitric oxide + H2O = Fe(II)-heme b-[protein] + nitrite + 2 H(+). It catalyses the reaction H2O2 + AH2 = A + 2 H2O. In terms of biological role, monomeric heme protein which primary function is to store oxygen and facilitate its diffusion within muscle tissues. Reversibly binds oxygen through a pentacoordinated heme iron and enables its timely and efficient release as needed during periods of heightened demand. Depending on the oxidative conditions of tissues and cells, and in addition to its ability to bind oxygen, it also has a nitrite reductase activity whereby it regulates the production of bioactive nitric oxide. Under stress conditions, like hypoxia and anoxia, it also protects cells against reactive oxygen species thanks to its pseudoperoxidase activity. This Pongo pygmaeus (Bornean orangutan) protein is Myoglobin (MB).